The primary structure comprises 448 residues: tRNA-2-methylthio-N(6)-dimethylallyladenosine synthase (448 aa).

The region spanning 3–118 (KKVFIKTFGC…LPELLNARAA (116 aa)) is the MTTase N-terminal domain. The [4Fe-4S] cluster site is built by Cys-12, Cys-49, Cys-81, Cys-155, Cys-159, and Cys-162. Positions 141 to 374 (RVEGASAFVS…QAVINRNILE (234 aa)) constitute a Radical SAM core domain. The TRAM domain maps to 377–440 (QERVGTVQRL…TYTLRGEVVM (64 aa)).

Belongs to the methylthiotransferase family. MiaB subfamily. Monomer. [4Fe-4S] cluster is required as a cofactor.

It is found in the cytoplasm. The catalysed reaction is N(6)-dimethylallyladenosine(37) in tRNA + (sulfur carrier)-SH + AH2 + 2 S-adenosyl-L-methionine = 2-methylsulfanyl-N(6)-dimethylallyladenosine(37) in tRNA + (sulfur carrier)-H + 5'-deoxyadenosine + L-methionine + A + S-adenosyl-L-homocysteine + 2 H(+). In terms of biological role, catalyzes the methylthiolation of N6-(dimethylallyl)adenosine (i(6)A), leading to the formation of 2-methylthio-N6-(dimethylallyl)adenosine (ms(2)i(6)A) at position 37 in tRNAs that read codons beginning with uridine. This is tRNA-2-methylthio-N(6)-dimethylallyladenosine synthase from Acidovorax sp. (strain JS42).